The primary structure comprises 143 residues: Crossover junction endodeoxyribonuclease Hjc (143 aa).

E12 provides a ligand contact to Mg(2+). S32 is a catalytic residue. Mg(2+) is bound by residues D42 and E55.

It belongs to the Holliday junction resolvase Hjc family. As to quaternary structure, homodimer. Interacts with PCNA subunit PCNA1. The cofactor is Mg(2+).

It carries out the reaction Endonucleolytic cleavage at a junction such as a reciprocal single-stranded crossover between two homologous DNA duplexes (Holliday junction).. With respect to regulation, autoinhibits at very high concentrations, possibly because of extreme junction distortion. Inhibition (and activity at low concentrations of enzyme) is stimulated by dsDNA and Sso7d. Activity stimulated by PCNA subunit PCNA1. In terms of biological role, a structure-specific endonuclease that resolves Holliday junction (HJ) intermediates during genetic recombination; may have some degree of sequence preference in a mobile junction. Cleaves 4-way DNA junctions introducing paired nicks in opposing strands, leaving a 5'-terminal phosphate and a 3'-terminal hydroxyl group that are subsequently ligated to produce recombinant products. Can cleave all 4 strands 3 bases 3' of the junction center. Cleaves both mobile and immobile junctions. Modifies the structure of the 4-way DNA junction, a model Holliday junction structure. The protein forms multiple complexes with 4-way DNA, suggesting more than 1 homodimer can bind to each junction. In Saccharolobus solfataricus (strain ATCC 35092 / DSM 1617 / JCM 11322 / P2) (Sulfolobus solfataricus), this protein is Crossover junction endodeoxyribonuclease Hjc.